The chain runs to 154 residues: MAVKIRLLRMGKIRNPQYRIVIADSRTKRDGRAIEFVGIYQPKHDPSVIEVKSDRVQYWLSVGAQPSEAVQRLLEKTGDWQKFKGLPAPEPLKVAPERVDRKAAYEAEAKAAAGLAEAPTKPAKKAAKAEAAPKTDEAAPKTEEQAGAGSGEQG.

Residues 111–121 (AAAGLAEAPTK) are compositionally biased toward low complexity. A disordered region spans residues 111–154 (AAAGLAEAPTKPAKKAAKAEAAPKTDEAAPKTEEQAGAGSGEQG). Residues 127–144 (AKAEAAPKTDEAAPKTEE) show a composition bias toward basic and acidic residues.

It belongs to the bacterial ribosomal protein bS16 family.

In Salinispora tropica (strain ATCC BAA-916 / DSM 44818 / JCM 13857 / NBRC 105044 / CNB-440), this protein is Small ribosomal subunit protein bS16.